A 254-amino-acid polypeptide reads, in one-letter code: MIQLKNVSKIYDNGTVGLKDINLNIDKGEFIVVVGLSGAGKSTLLRSINRLQDVSEGDIIIDGKSITSAKGKDLREIRRDIGMIFQSFNLVKRSSVLRNVLTGRVGYYPTWKTTFNLFTKEDKQKAYEALQRVDLADKVYTRADQLSGGQQQRVAIARVLTQNPKIILADEPTASLDPQTSRRVMHDLKMLNEEYGMTVVANLHSVELAKEFGDRVIGVRAGQIVYDGKMSETSQAVFDDIYNGGNGKKGEEDA.

Residues I2–N246 form the ABC transporter domain. Residue G35–S42 coordinates ATP.

The protein belongs to the ABC transporter superfamily. Phosphonates importer (TC 3.A.1.9.1) family. In terms of assembly, the complex is composed of two ATP-binding proteins (PhnC), two transmembrane proteins (PhnE) and a solute-binding protein (PhnD).

The protein resides in the cell membrane. It carries out the reaction phosphonate(out) + ATP + H2O = phosphonate(in) + ADP + phosphate + H(+). Functionally, part of the ABC transporter complex PhnCDE involved in phosphonates import. Responsible for energy coupling to the transport system. This chain is Phosphonates import ATP-binding protein PhnC, found in Lactobacillus johnsonii (strain CNCM I-12250 / La1 / NCC 533).